The sequence spans 84 residues: UPF0386 protein Oant_1614 (84 aa).

Belongs to the UPF0386 family.

The chain is UPF0386 protein Oant_1614 from Brucella anthropi (strain ATCC 49188 / DSM 6882 / CCUG 24695 / JCM 21032 / LMG 3331 / NBRC 15819 / NCTC 12168 / Alc 37) (Ochrobactrum anthropi).